A 239-amino-acid polypeptide reads, in one-letter code: Ureidoacrylate amidohydrolase RutB (239 aa).

The active-site Proton acceptor is the aspartate 35. Residue lysine 144 is part of the active site. Cysteine 177 (nucleophile) is an active-site residue.

Belongs to the isochorismatase family. RutB subfamily.

The catalysed reaction is (Z)-3-ureidoacrylate + H2O + H(+) = (Z)-3-aminoacrylate + NH4(+) + CO2. The enzyme catalyses (Z)-3-ureidoacrylate + H2O = (Z)-3-aminoacrylate + carbamate + H(+). It carries out the reaction (Z)-2-methylureidoacrylate + H2O + H(+) = (Z)-2-methylaminoacrylate + NH4(+) + CO2. In terms of biological role, hydrolyzes ureidoacrylate to form aminoacrylate and carbamate. The carbamate hydrolyzes spontaneously, thereby releasing one of the nitrogen atoms of the pyrimidine ring as ammonia and one of its carbon atoms as CO2. This Caulobacter segnis (strain ATCC 21756 / DSM 7131 / JCM 7823 / NBRC 15250 / LMG 17158 / TK0059) (Mycoplana segnis) protein is Ureidoacrylate amidohydrolase RutB.